Here is a 446-residue protein sequence, read N- to C-terminus: tRNA-2-methylthio-N(6)-dimethylallyladenosine synthase (446 aa).

Residues 2–122 (KKAYVKSYGC…LPDLLRQSRE (121 aa)) form the MTTase N-terminal domain. [4Fe-4S] cluster-binding residues include cysteine 11, cysteine 47, cysteine 85, cysteine 157, cysteine 161, and cysteine 164. One can recognise a Radical SAM core domain in the interval 143-375 (RNRGVTGFLT…QDLLDRQRHA (233 aa)). Positions 378-440 (AASVGTLTEI…SNSLFGEALE (63 aa)) constitute a TRAM domain.

Belongs to the methylthiotransferase family. MiaB subfamily. As to quaternary structure, monomer. Requires [4Fe-4S] cluster as cofactor.

Its subcellular location is the cytoplasm. It catalyses the reaction N(6)-dimethylallyladenosine(37) in tRNA + (sulfur carrier)-SH + AH2 + 2 S-adenosyl-L-methionine = 2-methylsulfanyl-N(6)-dimethylallyladenosine(37) in tRNA + (sulfur carrier)-H + 5'-deoxyadenosine + L-methionine + A + S-adenosyl-L-homocysteine + 2 H(+). Catalyzes the methylthiolation of N6-(dimethylallyl)adenosine (i(6)A), leading to the formation of 2-methylthio-N6-(dimethylallyl)adenosine (ms(2)i(6)A) at position 37 in tRNAs that read codons beginning with uridine. The protein is tRNA-2-methylthio-N(6)-dimethylallyladenosine synthase of Methylorubrum extorquens (strain CM4 / NCIMB 13688) (Methylobacterium extorquens).